Consider the following 139-residue polypeptide: Arsenate reductase (139 aa).

Catalysis depends on nucleophile residues C10, C82, and C89. 2 cysteine pairs are disulfide-bonded: C10/C82 and C82/C89.

Belongs to the low molecular weight phosphotyrosine protein phosphatase family. Thioredoxin-coupled ArsC subfamily. As to quaternary structure, monomer.

Its subcellular location is the cytoplasm. It catalyses the reaction arsenate + [thioredoxin]-dithiol + H(+) = arsenite + [thioredoxin]-disulfide + H2O. With respect to regulation, activity is potassium and sulfate-independent. Functionally, catalyzes the reduction of arsenate [As(V)] to arsenite [As(III)]. In vitro, can dephosphorylate para-nitrophenyl phosphate (pNPP). This Bacillus subtilis (strain 168) protein is Arsenate reductase.